The sequence spans 234 residues: 1-(5-phosphoribosyl)-5-[(5-phosphoribosylamino)methylideneamino] imidazole-4-carboxamide isomerase (234 aa).

Asp9 acts as the Proton acceptor in catalysis. Residue Asp131 is the Proton donor of the active site.

It belongs to the HisA/HisF family.

It is found in the cytoplasm. The catalysed reaction is 1-(5-phospho-beta-D-ribosyl)-5-[(5-phospho-beta-D-ribosylamino)methylideneamino]imidazole-4-carboxamide = 5-[(5-phospho-1-deoxy-D-ribulos-1-ylimino)methylamino]-1-(5-phospho-beta-D-ribosyl)imidazole-4-carboxamide. It functions in the pathway amino-acid biosynthesis; L-histidine biosynthesis; L-histidine from 5-phospho-alpha-D-ribose 1-diphosphate: step 4/9. The protein is 1-(5-phosphoribosyl)-5-[(5-phosphoribosylamino)methylideneamino] imidazole-4-carboxamide isomerase of Staphylococcus saprophyticus subsp. saprophyticus (strain ATCC 15305 / DSM 20229 / NCIMB 8711 / NCTC 7292 / S-41).